The chain runs to 285 residues: 4-diphosphocytidyl-2-C-methyl-D-erythritol kinase (285 aa).

K28 is an active-site residue. 109–119 is a binding site for ATP; sequence PVAAGLGGGSA. The active site involves D148.

It belongs to the GHMP kinase family. IspE subfamily.

It carries out the reaction 4-CDP-2-C-methyl-D-erythritol + ATP = 4-CDP-2-C-methyl-D-erythritol 2-phosphate + ADP + H(+). It participates in isoprenoid biosynthesis; isopentenyl diphosphate biosynthesis via DXP pathway; isopentenyl diphosphate from 1-deoxy-D-xylulose 5-phosphate: step 3/6. In terms of biological role, catalyzes the phosphorylation of the position 2 hydroxy group of 4-diphosphocytidyl-2C-methyl-D-erythritol. The protein is 4-diphosphocytidyl-2-C-methyl-D-erythritol kinase of Novosphingobium aromaticivorans (strain ATCC 700278 / DSM 12444 / CCUG 56034 / CIP 105152 / NBRC 16084 / F199).